Reading from the N-terminus, the 428-residue chain is Cell division protein DamX (428 aa).

The segment at 1 to 99 (MDEFKPEDEL…KRKKAASKPA (99 aa)) is disordered. Residues 1-103 (MDEFKPEDEL…AASKPASRQY (103 aa)) lie on the Cytoplasmic side of the membrane. Basic and acidic residues-rich tracts occupy residues 7-36 (EDEL…ERGE) and 50-64 (DDRR…RNEE). Residues 55–87 (TRAQKERNEEPEIEEEIDESEDETVDEERVERR) adopt a coiled-coil conformation. A compositionally biased stretch (acidic residues) spans 65 to 82 (PEIEEEIDESEDETVDEE). Residues 86-95 (RRPRKRKKAA) are compositionally biased toward basic residues. Residues 104-124 (MMMGVGILVLLLLIIGIGSAL) traverse the membrane as a helical segment. The Periplasmic portion of the chain corresponds to 125–428 (KAPSTTSSDQ…PLRQVQADLK (304 aa)). Disordered stretches follow at residues 149–190 (TDQA…VATD) and 226–344 (EPAT…KSAP). A compositionally biased stretch (polar residues) spans 236 to 257 (GNASRDTAKTQTAERPSTTRPA). Positions 288–334 (PAAPVASTKAPAATSTPAPKETATTAPVQTASPAQTTATPAAGAKTA) are enriched in low complexity. Residues 342-419 (SAPSSHYTLQ…VQAKNPWAKP (78 aa)) enclose the SPOR domain.

The protein belongs to the DamX family. In terms of assembly, interacts in vitro with multiple Fts proteins, including FtsQ and FtsN.

It localises to the cell inner membrane. In terms of biological role, non-essential cell division protein. This chain is Cell division protein DamX, found in Escherichia coli (strain K12).